The primary structure comprises 129 residues: Small ribosomal subunit protein uS11c (129 aa).

The protein belongs to the universal ribosomal protein uS11 family. Part of the 30S ribosomal subunit.

The protein resides in the plastid. It is found in the chloroplast. The protein is Small ribosomal subunit protein uS11c of Euglena gracilis.